The sequence spans 372 residues: Cyclic GMP-AMP synthase-like receptor (372 aa).

Residue T68 participates in GTP binding. ATP-binding positions include S70 and 82–84 (EFD). Mg(2+) contacts are provided by E82, D84, and D190. Residues D190 and 236–243 (LVCAPYWE) each bind GTP. ATP contacts are provided by residues 240 to 243 (PYWE), K261, and 274 to 278 (SYTIK).

The protein belongs to the mab-21 family. It depends on Mg(2+) as a cofactor. The cofactor is Mn(2+).

The enzyme catalyses GTP + ATP = 3',2'-cGAMP + 2 diphosphate. It carries out the reaction GTP + ATP = pppA(2'-5')pG + diphosphate. It catalyses the reaction pppA(2'-5')pG = 3',2'-cGAMP + diphosphate. The enzyme activity is specifically activated by double-stranded RNA (dsRNA). Its function is as follows. Nucleotidyltransferase that catalyzes the formation of cyclic GMP-AMP (3',2'-cGAMP) from ATP and GTP and plays a key role in innate immunity. Synthesizes 3',2'-cGAMP in a two-step reaction through production of the linear intermediate pppA(2'-5')pG. Acts as a key sensor of double-stranded RNA (dsRNA), the presence of dsRNA in the cytoplasm being a danger signal that triggers the immune responses. Directly binds dsRNA longer than 15 bp, activating the nucleotidyltransferase activity, leading to synthesis of 3',2'-cGAMP, a second messenger that binds to and activates Sting, thereby triggering the antiviral immune response via activation of the NF-kappa-B transcription factor Rel (Relish). In Drosophila eugracilis (Fruit fly), this protein is Cyclic GMP-AMP synthase-like receptor.